A 202-amino-acid polypeptide reads, in one-letter code: Nuclear transcription factor Y subunit C-6 (202 aa).

The segment covering 1–16 (MAENNNNNGDNMNNDN) has biased composition (low complexity). 2 disordered regions span residues 1 to 29 (MAENNNNNGDNMNNDNHQQPPSYSQLPPM) and 180 to 202 (AWPAAAGDGEDDAEDNGGNGGGN). Residues 17–29 (HQQPPSYSQLPPM) show a composition bias toward polar residues.

This sequence belongs to the NFYC/HAP5 subunit family. Heterotrimeric transcription factor composed of three components, NF-YA, NF-YB and NF-YC. NF-YB and NF-YC must interact and dimerize for NF-YA association and DNA binding. As to expression, expressed in flowers and siliques.

Its subcellular location is the nucleus. Stimulates the transcription of various genes by recognizing and binding to a CCAAT motif in promoters. The protein is Nuclear transcription factor Y subunit C-6 (NFYC6) of Arabidopsis thaliana (Mouse-ear cress).